A 700-amino-acid chain; its full sequence is Methionine--tRNA ligase (700 aa).

A 'HIGH' region motif is present at residues 14-24; it reads PYANGPVHLGH. Positions 146, 149, 159, and 162 each coordinate Zn(2+). The 'KMSKS' region motif lies at 343-347; it reads KFSKS. Residue Lys346 coordinates ATP. In terms of domain architecture, tRNA-binding spans 599-700; it reads EFEKIDLRVA…GDSIVGKPVK (102 aa).

The protein belongs to the class-I aminoacyl-tRNA synthetase family. MetG type 1 subfamily. As to quaternary structure, homodimer. Requires Zn(2+) as cofactor.

The protein localises to the cytoplasm. The catalysed reaction is tRNA(Met) + L-methionine + ATP = L-methionyl-tRNA(Met) + AMP + diphosphate. Functionally, is required not only for elongation of protein synthesis but also for the initiation of all mRNA translation through initiator tRNA(fMet) aminoacylation. This Chloroherpeton thalassium (strain ATCC 35110 / GB-78) protein is Methionine--tRNA ligase.